The chain runs to 570 residues: Endo-1,4-beta-xylanase 5-like (570 aa).

The first 23 residues, 1-23 (MNSIKNGFFLCMIFLLWCHVDSG), serve as a signal peptide directing secretion. 3 N-linked (GlcNAc...) asparagine glycosylation sites follow: Asn-197, Asn-261, and Asn-307. Positions 202–501 (KGVVISLKQT…TQTGDVIDKL (300 aa)) constitute a GH10 domain. Glu-332 functions as the Proton donor in the catalytic mechanism. Asn-346 carries an N-linked (GlcNAc...) asparagine glycan. The active-site Nucleophile is Glu-439. Asn-490, Asn-515, Asn-537, and Asn-545 each carry an N-linked (GlcNAc...) asparagine glycan.

The protein belongs to the glycosyl hydrolase 10 (cellulase F) family.

It catalyses the reaction Endohydrolysis of (1-&gt;4)-beta-D-xylosidic linkages in xylans.. It functions in the pathway glycan degradation; xylan degradation. Binds to and hydrolyzes insoluble and soluble xylan substrates. The sequence is that of Endo-1,4-beta-xylanase 5-like from Arabidopsis thaliana (Mouse-ear cress).